The following is a 520-amino-acid chain: MALRVYNTLTRQQEHFQPWEHGHVRLYGCGPTVYNYPHLGNLRAYVFQDTVRRTLHFLGYRVTYVMNITDVGHLESDADSGEDKLVRSAQAHGHSVLQVAAHYRAAFFRDTALLGIEEPSIVCNASDCIQDMIAFIEQLLARGHAYCAGGNVYFDVRSFPSYESFGSAAVEDVQEGEDAARARVAHDTHKRDARDFVLWFTRSKFVRHALTWDSPWGRGYPGWHIGCSAMSMKFLGPRCDIHIGGVDHIRVHHRNERAQCEAITGAPWVRYWLHHEFLLMQLQKRAVHADMGSSVVSSFSKMSKSCGQFLTLSSLQERGFQPADFRFFLLSGQYRTQLAFSWDALKTARAARRSFVRRVARVVDAARATTGSVRGTSAECAAERVCESRASESELLLTDFRAALEDDFSTPRALSALQKLVRDTSVPPSLCVSALQVADTVLGLGIIQEATASLSAQVPAGDTLPQRPLPSEEWIGQLVRARAHARQTRDFPRADEIRRQLKAEGIELEDTHLGTIWKRV.

Cys-29 is a Zn(2+) binding site. The 'HIGH' region signature appears at 31–41; sequence PTVYNYPHLGN. Zn(2+)-binding residues include Cys-227, His-252, and Glu-256. Residues 301–305 carry the 'KMSKS' region motif; it reads KMSKS. Lys-304 serves as a coordination point for ATP.

It belongs to the class-I aminoacyl-tRNA synthetase family. As to quaternary structure, monomer. Requires Zn(2+) as cofactor.

It localises to the cytoplasm. It carries out the reaction tRNA(Cys) + L-cysteine + ATP = L-cysteinyl-tRNA(Cys) + AMP + diphosphate. This chain is Cysteine--tRNA ligase (cysS), found in Treponema pallidum (strain Nichols).